Reading from the N-terminus, the 329-residue chain is HTH-type transcriptional regulator ArgR (329 aa).

An HTH araC/xylS-type domain is found at 214–312; sequence TQAVLLMEAN…GVTPREDRNQ (99 aa). 2 consecutive DNA-binding regions (H-T-H motif) follow at residues 231–252 and 279–302; these read DEIA…KQYL and IIQI…RNFF. Residues 307 to 329 form a disordered region; the sequence is REDRNQRRGGSAFETTFTPVERG. The segment covering 319–329 has biased composition (polar residues); it reads FETTFTPVERG.

In terms of biological role, argR could be a transcriptional activator of the dauBAR operon in response to the presence of L-Arg. In Pseudomonas aeruginosa (strain ATCC 15692 / DSM 22644 / CIP 104116 / JCM 14847 / LMG 12228 / 1C / PRS 101 / PAO1), this protein is HTH-type transcriptional regulator ArgR (argR).